The primary structure comprises 66 residues: Large ribosomal subunit protein bL33c (66 aa).

It belongs to the bacterial ribosomal protein bL33 family.

Its subcellular location is the plastid. The protein resides in the chloroplast. This Acorus calamus (Sweet flag) protein is Large ribosomal subunit protein bL33c.